The primary structure comprises 114 residues: PDZK1-interacting protein 1 (114 aa).

Topologically, residues 1-28 (MSALSLVILGLLMAVPPASCQQGLGNLQ) are extracellular. Residues 29–51 (PWMQGLIAVAVFLVLVAIAFAIN) form a helical membrane-spanning segment. The Cytoplasmic portion of the chain corresponds to 52-114 (HFWCQEEREP…EEGRVHSTPM (63 aa)). Residue S85 is modified to Phosphoserine. A disordered region spans residues 92–114 (SNEHENAYENTSEEEGRVHSTPM). The segment covering 105-114 (EEGRVHSTPM) has biased composition (basic and acidic residues).

The protein belongs to the PDZK1-interacting protein 1/SMIM24 family. As to quaternary structure, forms a heterodimer (via N-terminal transmembrane helix) with SLC5A2/SGLT2 (via TM13); this interaction enhances SLC5A2 transporter activity. Interacts with PDZK1.

It localises to the apical cell membrane. In terms of biological role, auxiliary protein of electrogenic Na(+)-coupled sugar symporter SLC5A2/SGLT2 and SLC5A1/SGLT1. Essential for the transporter activity of SLC5A2/SGLT2 but not SLC5A1/SGLT1. The protein is PDZK1-interacting protein 1 of Sus scrofa (Pig).